A 575-amino-acid polypeptide reads, in one-letter code: UvrABC system protein C (575 aa).

The GIY-YIG domain maps to 16–94 (SQPGVYRMYD…IKLYQPRYNV (79 aa)). One can recognise a UVR domain in the interval 204-239 (DQVLTQLISRMETASQNLEFEEAARIRDQIQAVRRV).

Belongs to the UvrC family. As to quaternary structure, interacts with UvrB in an incision complex.

It is found in the cytoplasm. In terms of biological role, the UvrABC repair system catalyzes the recognition and processing of DNA lesions. UvrC both incises the 5' and 3' sides of the lesion. The N-terminal half is responsible for the 3' incision and the C-terminal half is responsible for the 5' incision. This is UvrABC system protein C from Shigella dysenteriae serotype 1 (strain Sd197).